A 763-amino-acid chain; its full sequence is Xaa-Pro dipeptidyl-peptidase (763 aa).

Residues S348, D468, and H498 each act as charge relay system in the active site.

Belongs to the peptidase S15 family. In terms of assembly, homodimer.

Its subcellular location is the cytoplasm. The enzyme catalyses Hydrolyzes Xaa-Pro-|- bonds to release unblocked, N-terminal dipeptides from substrates including Ala-Pro-|-p-nitroanilide and (sequentially) Tyr-Pro-|-Phe-Pro-|-Gly-Pro-|-Ile.. Its function is as follows. Removes N-terminal dipeptides sequentially from polypeptides having unsubstituted N-termini provided that the penultimate residue is proline. The chain is Xaa-Pro dipeptidyl-peptidase from Lactococcus lactis subsp. cremoris (strain SK11).